The following is a 473-amino-acid chain: Protein TED1 (473 aa).

Topologically, residues 1 to 8 (MLRCAVKK) are cytoplasmic. A helical transmembrane segment spans residues 9-29 (FAYFATFLTIVANIYIYTYPS). Residues 30–451 (FHPEQCSWNC…FSLCPFAIQH (422 aa)) are Lumenal-facing. Asparagine 38, asparagine 147, asparagine 229, asparagine 266, and asparagine 307 each carry an N-linked (GlcNAc...) asparagine glycan. The helical transmembrane segment at 452–472 (VWWFAKVSLLVTIFTWSSLLF) threads the bilayer. Valine 473 is a topological domain (cytoplasmic).

N-glycosylated.

The protein resides in the endoplasmic reticulum membrane. Its function is as follows. Acts together with EMP24 and ERV25 in cargo exit from the endoplasmic reticulum. The chain is Protein TED1 (TED1) from Saccharomyces cerevisiae (strain ATCC 204508 / S288c) (Baker's yeast).